The following is a 757-amino-acid chain: MGSSLNKPLSDRVEDINNQSSMIYDPWRHRGDVNSTYHSSSSVTHRRRNHRLSPLEKQKMKNIQSLNFSVNDNLLQREEYEKTTKGLHLKKTFGKWIICLFLGVIVGCIAYVIKMVVQLLQGLKFHYTNHYVSNGLQGEAFLTFLGINLLFVFLSCLMVIVAGPLASSSGIPEVKGILNGVKVREALGFRALLGKIVSLVLSFSSGLFVGPEGPMIHIGSAVGAAISQFKSSTMGFYPSLFLSYRNDRDKRDFISIGAATGLAAAFGAPIGGVLFSIEEVSSFWSRQLTWRTFFTCVIAAFTTNFLLQGIGSSPDMHDTGLLTFGFSRLYLFRYSELLCFCFLGLIGGLLGAFFVFLNIHLNKWRKEKLKQNPYLRLFEALFVSVVTSVVCYYASFIFDCRYQSNIVIETSVCEDQSNTEMVQFFCPDGMYSELGSLLFGNPDQALRRLYSRTNNMFTLPPLLVFTLISLFFSIWSSGLWVAGGLFVPMMMVGAGFGRLFGQTISMWFTNIDSSIYALVGSAAMMAGYCRMTVCIVVIMVELTEGTQYLVPIILAVMISKWVGDFFNESVYEHLMEQKSIPFLQSKPPHSTNNIRISDVMSKNVVVLPEVCQVRLLVNILNSNNHNAFPVINSGPYDNQRLYRGIILRDHILVLLFYRVFYRGTGEEIYLDENFDFDKFTTETSKSPPPLSEMNFDQFELDSFIDLRPYMNSSGVTIHNTFSFVEAYKLFRNMGLRHLPVIDINNEVVGMVTRNDLF.

Residues 1–96 (MGSSLNKPLS…LHLKKTFGKW (96 aa)) are Cytoplasmic-facing. 11 helical membrane-spanning segments follow: residues 97-117 (IICLFLGVIVGCIAYVIKMVV), 141-161 (FLTFLGINLLFVFLSCLMVIV), 196-216 (IVSLVLSFSSGLFVGPEGPMI), 253-273 (FISIGAATGLAAAFGAPIGGV), 292-312 (TFFTCVIAAFTTNFLLQGIGS), 337-357 (LLCFCFLGLIGGLLGAFFVFL), 378-398 (FEALFVSVVTSVVCYYASFIF), 462-482 (LLVFTLISLFFSIWSSGLWVA), 484-504 (GLFVPMMMVGAGFGRLFGQTI), 506-526 (MWFTNIDSSIYALVGSAAMMA), and 535-555 (IVVIMVELTEGTQYLVPIILA). CBS domains lie at 600-667 (MSKN…TGEE) and 710-757 (MNSS…NDLF).

It belongs to the chloride channel (TC 2.A.49) family.

It localises to the membrane. In terms of biological role, voltage-gated chloride channel. Chloride channels may have several functions including the regulation of cell volume, membrane potential stabilization and signal transduction. This is Chloride channel protein C (clcC) from Dictyostelium discoideum (Social amoeba).